The sequence spans 362 residues: E3 ubiquitin-protein ligase TM129 (362 aa).

Topologically, residues 1-6 (MDSPEV) are lumenal. A helical membrane pass occupies residues 7-27 (TFTLAYLVFAVCFVFTPTEFH). Topologically, residues 28 to 56 (SAGLTVQNLLSGWLGSEDAAFVPYHLRRT) are cytoplasmic. A helical transmembrane segment spans residues 57–77 (AATLLCHSLLPLGYYVGMCFA). Over 78 to 94 (ASEKQLYYPSQTPETWR) the chain is Lumenal. The helical transmembrane segment at 95 to 115 (AFLLLALMLPAIACTLIYYWS) threads the bilayer. Topologically, residues 116–362 (RDHWACHPLA…FCVLDVCAVR (247 aa)) are cytoplasmic. The RING-type; degenerate zinc-finger motif lies at 285–350 (CIGCMQTQAS…ASRVPCPTCR (66 aa)).

This sequence belongs to the TMEM129 family. In terms of assembly, integral component of ER-resident dislocation complexes.

Its subcellular location is the endoplasmic reticulum membrane. It carries out the reaction S-ubiquitinyl-[E2 ubiquitin-conjugating enzyme]-L-cysteine + [acceptor protein]-L-lysine = [E2 ubiquitin-conjugating enzyme]-L-cysteine + N(6)-ubiquitinyl-[acceptor protein]-L-lysine.. It participates in protein modification; protein ubiquitination. Its function is as follows. E3 ubiquitin-protein ligase involved in ER-associated protein degradation, preferentially associates with the E2 enzyme UBE2J2. Exploited by viral US11 proteins to mediate HLA class I proteins degradation. The chain is E3 ubiquitin-protein ligase TM129 (TMEM129) from Bos taurus (Bovine).